We begin with the raw amino-acid sequence, 426 residues long: Transcription factor bHLH60 (426 aa).

Polar residues-rich tracts occupy residues 117–137 (QNGN…SSAN) and 148–172 (TDSS…QNNR). The tract at residues 117 to 201 (QNGNISGETP…SSEENEKLPY (85 aa)) is disordered. Positions 191–200 (KSSEENEKLP) are enriched in basic and acidic residues. Positions 210-307 (QATDSHSLAE…DEIINHVQSL (98 aa)) constitute a bHLH domain. Positions 367-398 (HRQLQQPPTQQWPFDGLNQPVWGREEDQAHGN) are disordered.

Homodimer. As to expression, expressed constitutively in roots, leaves, stems, and flowers.

The protein localises to the nucleus. This Arabidopsis thaliana (Mouse-ear cress) protein is Transcription factor bHLH60 (BHLH60).